Here is a 261-residue protein sequence, read N- to C-terminus: Putative [LysW]-aminoadipate/[LysW]-glutamate kinase (261 aa).

Substrate is bound by residues 35-36 (GG), R62, and N162.

This sequence belongs to the acetylglutamate kinase family. LysZ subfamily.

It is found in the cytoplasm. It carries out the reaction [amino-group carrier protein]-C-terminal-N-(1,4-dicarboxybutan-1-yl)-L-glutamine + ATP = [amino-group carrier protein]-C-terminal-N-(1-carboxy-5-phosphooxy-5-oxopentan-1-yl)-L-glutamine + ADP. It catalyses the reaction [amino-group carrier protein]-C-terminal-gamma-(L-glutamyl)-L-glutamate + ATP = [amino-group carrier protein]-C-terminal-gamma-(5-phospho-L-glutamyl)-L-glutamate + ADP. It functions in the pathway amino-acid biosynthesis; L-lysine biosynthesis via AAA pathway; L-lysine from L-alpha-aminoadipate (Thermus route): step 2/5. Its pathway is amino-acid biosynthesis; L-arginine biosynthesis. Functionally, involved in both the arginine and lysine biosynthetic pathways. Phosphorylates the LysW-bound precursors glutamate (for arginine biosynthesis), respectively alpha-aminoadipate (for lysine biosynthesis). The sequence is that of Putative [LysW]-aminoadipate/[LysW]-glutamate kinase from Pyrobaculum islandicum (strain DSM 4184 / JCM 9189 / GEO3).